The following is a 495-amino-acid chain: Serine/threonine-protein kinase F (495 aa).

Positions 46–314 constitute a Protein kinase domain; the sequence is YLPVKLLGQG…ASAEEVLAVL (269 aa). Residues 52–60 and lysine 77 contribute to the ATP site; that span reads LGQGGFGAA. The Proton acceptor role is filled by aspartate 187. The interval 316–354 is disordered; sequence GGKGNQGKAPPGATVSTPQGTNTQIQPTPASSASPLTAP. The span at 329–350 shows a compositional bias: polar residues; sequence TVSTPQGTNTQIQPTPASSASP.

It belongs to the protein kinase superfamily. Ser/Thr protein kinase family.

The catalysed reaction is L-seryl-[protein] + ATP = O-phospho-L-seryl-[protein] + ADP + H(+). It catalyses the reaction L-threonyl-[protein] + ATP = O-phospho-L-threonyl-[protein] + ADP + H(+). In Synechocystis sp. (strain ATCC 27184 / PCC 6803 / Kazusa), this protein is Serine/threonine-protein kinase F (spkF).